The following is a 443-amino-acid chain: D-serine dehydratase (443 aa).

N6-(pyridoxal phosphate)lysine is present on lysine 118.

Belongs to the serine/threonine dehydratase family. DsdA subfamily. As to quaternary structure, monomer. Pyridoxal 5'-phosphate is required as a cofactor.

It catalyses the reaction D-serine = pyruvate + NH4(+). This is D-serine dehydratase from Escherichia coli O17:K52:H18 (strain UMN026 / ExPEC).